Here is a 143-residue protein sequence, read N- to C-terminus: Large ribosomal subunit protein uL13 (143 aa).

This sequence belongs to the universal ribosomal protein uL13 family. In terms of assembly, part of the 50S ribosomal subunit.

Its function is as follows. This protein is one of the early assembly proteins of the 50S ribosomal subunit, although it is not seen to bind rRNA by itself. It is important during the early stages of 50S assembly. In Chloroflexus aggregans (strain MD-66 / DSM 9485), this protein is Large ribosomal subunit protein uL13.